A 610-amino-acid polypeptide reads, in one-letter code: UvrABC system protein C (610 aa).

Residues 16–94 (SQPGVYRMYD…IKLYQPRYNV (79 aa)) enclose the GIY-YIG domain. The UVR domain maps to 204–239 (DQVLTQLISRMETASQNLEFEEAARIRDQIQAVRRV).

The protein belongs to the UvrC family. Interacts with UvrB in an incision complex.

It is found in the cytoplasm. Functionally, the UvrABC repair system catalyzes the recognition and processing of DNA lesions. UvrC both incises the 5' and 3' sides of the lesion. The N-terminal half is responsible for the 3' incision and the C-terminal half is responsible for the 5' incision. The sequence is that of UvrABC system protein C from Escherichia coli O45:K1 (strain S88 / ExPEC).